The following is a 229-amino-acid chain: Bcl-2-like protein 1 (229 aa).

Residues 4-24 (SNRELVIDFVSYKLSQRGHCW) carry the BH4 motif. A BH3 motif is present at residues 82–96 (VRQALRDAGDEFELR). Positions 125–144 (ELFHDGVNWGRIVAFFSFGG) match the BH1 motif. A BH2 motif is present at residues 176 to 191 (PWIQENGGWERFVDLY). Residues 206-223 (FNKWLLTGATVAGVLLLG) traverse the membrane as a helical segment.

The protein belongs to the Bcl-2 family. As to expression, highest expression in organs with lymphoid development.

Its subcellular location is the mitochondrion membrane. It is found in the nucleus membrane. The protein localises to the mitochondrion matrix. The protein resides in the cytoplasm. It localises to the cytoskeleton. Its subcellular location is the microtubule organizing center. It is found in the centrosome. The protein localises to the cytosol. The protein resides in the cytoplasmic vesicle. It localises to the secretory vesicle. Its subcellular location is the synaptic vesicle membrane. Functionally, dominant regulator of apoptotic cell death. The long form displays cell death repressor activity, whereas the short isoform promotes apoptosis. Also acts as a regulator of G2 checkpoint and progression to cytokinesis during mitosis. The protein is Bcl-2-like protein 1 (BCL2L1) of Gallus gallus (Chicken).